We begin with the raw amino-acid sequence, 98 residues long: NADH-ubiquinone oxidoreductase chain 4L (98 aa).

Helical transmembrane passes span S2 to F22, L26 to S46, and I61 to I81.

It belongs to the complex I subunit 4L family. As to quaternary structure, core subunit of respiratory chain NADH dehydrogenase (Complex I) which is composed of 45 different subunits.

Its subcellular location is the mitochondrion inner membrane. The enzyme catalyses a ubiquinone + NADH + 5 H(+)(in) = a ubiquinol + NAD(+) + 4 H(+)(out). Its function is as follows. Core subunit of the mitochondrial membrane respiratory chain NADH dehydrogenase (Complex I) which catalyzes electron transfer from NADH through the respiratory chain, using ubiquinone as an electron acceptor. Part of the enzyme membrane arm which is embedded in the lipid bilayer and involved in proton translocation. This Nephelomys albigularis (Tomes's rice rat) protein is NADH-ubiquinone oxidoreductase chain 4L (MT-ND4L).